The sequence spans 277 residues: MCVGARRLGRGPCAALLLLGLGLSTVTGLHCVGDTYPSNDRCCHECRPGNGMVSRCSRSQNTVCRPCGPGFYNDVVSSKPCKPCTWCNLRSGSERKQLCTATQDTVCRCRAGTQPLDSYKPGVDCAPCPPGHFSPGDNQACKPWTNCTLAGKHTLQPASNSSDAICEDRDPPATQPQETQGPPARPITVQPTEAWPRTSQGPSTRPVEVPGGRAVAAILGLGLVLGLLGPLAILLALYLLRRDQRLPPDAHKPPGGGSFRTPIQEEQADAHSTLAKI.

A signal peptide spans 1–28; it reads MCVGARRLGRGPCAALLLLGLGLSTVTG. Topologically, residues 29–214 are extracellular; sequence LHCVGDTYPS…RPVEVPGGRA (186 aa). 2 TNFR-Cys repeats span residues 30–65 and 66–107; these read HCVG…TVCR and PCGP…DTVC. 8 disulfides stabilise this stretch: Cys-31/Cys-42, Cys-43/Cys-56, Cys-46/Cys-64, Cys-67/Cys-81, Cys-84/Cys-99, Cys-87/Cys-107, Cys-109/Cys-125, and Cys-128/Cys-141. Residues 108–126 form a TNFR-Cys 3; truncated repeat; it reads RCRAGTQPLDSYKPGVDCA. One copy of the TNFR-Cys 4 repeat lies at 127–167; the sequence is PCPPGHFSPGDNQACKPWTNCTLAGKHTLQPASNSSDAICE. N-linked (GlcNAc...) asparagine glycosylation is found at Asn-146 and Asn-160. Cys-147 and Cys-166 are disulfide-bonded. The tract at residues 158–209 is disordered; the sequence is ASNSSDAICEDRDPPATQPQETQGPPARPITVQPTEAWPRTSQGPSTRPVEV. Residues 215 to 235 traverse the membrane as a helical segment; the sequence is VAAILGLGLVLGLLGPLAILL. Residues 236–277 are Cytoplasmic-facing; the sequence is ALYLLRRDQRLPPDAHKPPGGGSFRTPIQEEQADAHSTLAKI. The segment at 248 to 277 is disordered; sequence PDAHKPPGGGSFRTPIQEEQADAHSTLAKI.

As to quaternary structure, interacts with TRAF2, TRAF3 and TRAF5. In terms of assembly, (Microbial infection) Interacts with Human herpesvirus 6B/HHV-6B gQ1:gQ2 proteins.

The protein resides in the membrane. Its function is as follows. Receptor for TNFSF4/OX40L/GP34. Is a costimulatory molecule implicated in long-term T-cell immunity. Functionally, (Microbial infection) Acts as a receptor for human herpesvirus 6B/HHV-6B. This is Tumor necrosis factor receptor superfamily member 4 (TNFRSF4) from Homo sapiens (Human).